Here is a 183-residue protein sequence, read N- to C-terminus: Photosystem II extrinsic protein V (183 aa).

Residues 1–31 (MTFGHCRRASTLRSAFVLGLCGLLLAGCSGA) form the signal peptide. Heme c-binding residues include Cys84, Cys87, His88, and Cys138.

It belongs to the cytochrome c family. PsbV subfamily. In terms of assembly, PSII is composed of 1 copy each of membrane proteins PsbA, PsbB, PsbC, PsbD, PsbE, PsbF, PsbH, PsbI, PsbJ, PsbK, PsbL, PsbM, PsbT, PsbX, Psb30/Ycf12, peripheral proteins PsbO, CyanoQ (PsbQ), PsbU, PsbV and a large number of cofactors. It forms dimeric complexes. It depends on heme c as a cofactor.

The protein resides in the cell inner membrane. Probably one of the extrinsic, lumenal subunits of photosystem II (PSII). PSII is a light-driven water plastoquinone oxidoreductase, using light energy to abstract electrons from H(2)O, generating a proton gradient subsequently used for ATP formation. The extrinsic proteins stabilize the structure of photosystem II oxygen-evolving complex (OEC), the ion environment of oxygen evolution and protect the OEC against heat-induced inactivation. Low-potential cytochrome c that plays a role in the OEC of PSII. The sequence is that of Photosystem II extrinsic protein V (psbV1) from Gloeobacter violaceus (strain ATCC 29082 / PCC 7421).